We begin with the raw amino-acid sequence, 287 residues long: Pantothenate synthetase (287 aa).

30-37 is an ATP binding site; sequence MGYLHEGH. His-37 (proton donor) is an active-site residue. Residue Gln-61 participates in (R)-pantoate binding. Position 61 (Gln-61) interacts with beta-alanine. 150–153 lines the ATP pocket; sequence GMKD. Gln-156 contributes to the (R)-pantoate binding site. ATP contacts are provided by residues Val-179 and 187 to 190; that span reads LSSR.

This sequence belongs to the pantothenate synthetase family. As to quaternary structure, homodimer.

It is found in the cytoplasm. It catalyses the reaction (R)-pantoate + beta-alanine + ATP = (R)-pantothenate + AMP + diphosphate + H(+). Its pathway is cofactor biosynthesis; (R)-pantothenate biosynthesis; (R)-pantothenate from (R)-pantoate and beta-alanine: step 1/1. Functionally, catalyzes the condensation of pantoate with beta-alanine in an ATP-dependent reaction via a pantoyl-adenylate intermediate. This chain is Pantothenate synthetase, found in Coprothermobacter proteolyticus (strain ATCC 35245 / DSM 5265 / OCM 4 / BT).